Reading from the N-terminus, the 293-residue chain is 4-hydroxy-tetrahydrodipicolinate synthase (293 aa).

Thr47 is a pyruvate binding site. Tyr135 (proton donor/acceptor) is an active-site residue. The active-site Schiff-base intermediate with substrate is Lys164. Ile205 is a pyruvate binding site.

This sequence belongs to the DapA family. Homotetramer; dimer of dimers.

The protein resides in the cytoplasm. It catalyses the reaction L-aspartate 4-semialdehyde + pyruvate = (2S,4S)-4-hydroxy-2,3,4,5-tetrahydrodipicolinate + H2O + H(+). It functions in the pathway amino-acid biosynthesis; L-lysine biosynthesis via DAP pathway; (S)-tetrahydrodipicolinate from L-aspartate: step 3/4. In terms of biological role, catalyzes the condensation of (S)-aspartate-beta-semialdehyde [(S)-ASA] and pyruvate to 4-hydroxy-tetrahydrodipicolinate (HTPA). The polypeptide is 4-hydroxy-tetrahydrodipicolinate synthase (Symbiobacterium thermophilum (strain DSM 24528 / JCM 14929 / IAM 14863 / T)).